A 261-amino-acid polypeptide reads, in one-letter code: Carbonic anhydrase 1 (261 aa).

At A2 the chain carries N-acetylalanine. The Alpha-carbonic anhydrase domain maps to 4–261 (PDWGYDDKNG…LKGRTVRASF (258 aa)). The active-site Proton donor/acceptor is H65. H95, H97, and H120 together coordinate Zn(2+). Residues T200 and 200 to 201 (TH) each bind substrate. A disordered region spans residues 235–261 (EGDNPVPSQRNNRPTQPLKGRTVRASF). Residues 240–249 (VPSQRNNRPT) show a composition bias toward polar residues.

The protein belongs to the alpha-carbonic anhydrase family. It depends on Zn(2+) as a cofactor.

It localises to the cytoplasm. The enzyme catalyses hydrogencarbonate + H(+) = CO2 + H2O. It carries out the reaction urea = cyanamide + H2O. Its activity is regulated as follows. Inhibited by acetazolamide. In terms of biological role, catalyzes the reversible hydration of carbon dioxide. Can hydrate cyanamide to urea. The chain is Carbonic anhydrase 1 (CA1) from Macaca nemestrina (Pig-tailed macaque).